The sequence spans 362 residues: Phosphoserine aminotransferase (362 aa).

An L-glutamate-binding site is contributed by arginine 43. Pyridoxal 5'-phosphate is bound by residues 77–78 (AR), tryptophan 103, threonine 153, aspartate 173, and glutamine 196. Residue lysine 197 is modified to N6-(pyridoxal phosphate)lysine.

The protein belongs to the class-V pyridoxal-phosphate-dependent aminotransferase family. SerC subfamily. In terms of assembly, homodimer. Pyridoxal 5'-phosphate is required as a cofactor.

The protein localises to the cytoplasm. It carries out the reaction O-phospho-L-serine + 2-oxoglutarate = 3-phosphooxypyruvate + L-glutamate. It catalyses the reaction 4-(phosphooxy)-L-threonine + 2-oxoglutarate = (R)-3-hydroxy-2-oxo-4-phosphooxybutanoate + L-glutamate. It functions in the pathway amino-acid biosynthesis; L-serine biosynthesis; L-serine from 3-phospho-D-glycerate: step 2/3. Its pathway is cofactor biosynthesis; pyridoxine 5'-phosphate biosynthesis; pyridoxine 5'-phosphate from D-erythrose 4-phosphate: step 3/5. Its function is as follows. Catalyzes the reversible conversion of 3-phosphohydroxypyruvate to phosphoserine and of 3-hydroxy-2-oxo-4-phosphonooxybutanoate to phosphohydroxythreonine. The protein is Phosphoserine aminotransferase of Legionella pneumophila (strain Corby).